The following is a 327-amino-acid chain: Taste receptor type 2 member 102 (327 aa).

Over 1–7 the chain is Extracellular; it reads MEPVIYS. Residues 8-28 form a helical membrane-spanning segment; the sequence is FATLLIHVEFIFGNLSNGFIV. At 29 to 46 the chain is on the cytoplasmic side; sequence LSNFWDWVIKRKLSTIDK. The chain crosses the membrane as a helical span at residues 47-67; sequence ILLTLAISRITLIWEIYTWFT. The Extracellular portion of the chain corresponds to 68-87; sequence SVYGPSSFAIGMKLQILYFT. A helical membrane pass occupies residues 88-108; the sequence is WILSSHFSLWFATALSIFYLL. The Cytoplasmic segment spans residues 109 to 124; that stretch reads RIANCSWKIFLYLKWR. Residues 125–145 form a helical membrane-spanning segment; sequence LKQVIVGMLLASLVFLPGILT. Residues 146–179 lie on the Extracellular side of the membrane; the sequence is QRTLEERPYRYGGNTSEDSMETDFARFTELILFN. Residues N159 and N179 are each glycosylated (N-linked (GlcNAc...) asparagine). The chain crosses the membrane as a helical span at residues 180–200; it reads LTIFSVIPFSLASISFLLLIF. Residues 201-229 lie on the Cytoplasmic side of the membrane; sequence SLWKHLRKMQLSSRGHGDPSTKAHTNALR. Residues 230 to 250 form a helical membrane-spanning segment; sequence IMVSFLLLYSIYFLSLLLSWI. Residues 251–260 lie on the Extracellular side of the membrane; the sequence is AQKHHSKLVD. The helical transmembrane segment at 261–281 threads the bilayer; sequence IIGIITGLMYPSAHSFILILG. Residues 282–327 lie on the Cytoplasmic side of the membrane; sequence NSKLMQTSLWILSHLRCRLKGENILNPSGNQVTSCYIFCIANKSVS.

This sequence belongs to the G-protein coupled receptor T2R family.

Its subcellular location is the membrane. Putative taste receptor which may play a role in the perception of bitterness. This chain is Taste receptor type 2 member 102, found in Rattus norvegicus (Rat).